Reading from the N-terminus, the 265-residue chain is MALYRTKELVSLVSIMFVLLATNIEALSFNFPKITPGNTAITLQGNAKILANGVLALTNSTQIPPTTTFPSTGRALYSTPVPLWDSATGNVASFVTSFSFVILNPSGRVPTDGLVFFIAPPDTEIPNNSQSQYLGVVDSKTSINRFVGLEFDLYANSFDPYMRHIGIDINSLISTKTVRYNFVSGSLTKVTIIYDSPSNTLTAVITYENGQISTISQNVDLKAVLPKDVSVGFSATSTIAVSHNIHSWSFTSNLEATTGNIVSQV.

The segment at residues 1–21 is a signal peptide (or 23); it reads MALYRTKELVSLVSIMFVLLA. 2 N-linked (GlcNAc...) asparagine glycosylation sites follow: N59 and N127.

It belongs to the leguminous lectin family. In terms of assembly, monomer. Most highly expressed in the epidermal layer of developing shoot tips.

The sequence is that of Non-seed lectin from Pisum sativum (Garden pea).